We begin with the raw amino-acid sequence, 132 residues long: UPF0357 protein YCL012C (132 aa).

A signal peptide spans 1–25 (MWDLFYFKVFFWVVLISLCIFMVHR).

It belongs to the UPF0357 family.

This Saccharomyces bayanus (Yeast) protein is UPF0357 protein YCL012C (YCL012C).